We begin with the raw amino-acid sequence, 321 residues long: Ribose-phosphate pyrophosphokinase (321 aa).

ATP is bound by residues 44–46 (DGE) and 103–104 (RQ). Residues His137 and Asp179 each coordinate Mg(2+). Lys202 is an active-site residue. D-ribose 5-phosphate is bound by residues Arg204, Asp228, and 232–236 (DTAGT).

The protein belongs to the ribose-phosphate pyrophosphokinase family. Class I subfamily. Homohexamer. Mg(2+) serves as cofactor.

It is found in the cytoplasm. The catalysed reaction is D-ribose 5-phosphate + ATP = 5-phospho-alpha-D-ribose 1-diphosphate + AMP + H(+). It functions in the pathway metabolic intermediate biosynthesis; 5-phospho-alpha-D-ribose 1-diphosphate biosynthesis; 5-phospho-alpha-D-ribose 1-diphosphate from D-ribose 5-phosphate (route I): step 1/1. Involved in the biosynthesis of the central metabolite phospho-alpha-D-ribosyl-1-pyrophosphate (PRPP) via the transfer of pyrophosphoryl group from ATP to 1-hydroxyl of ribose-5-phosphate (Rib-5-P). The chain is Ribose-phosphate pyrophosphokinase from Staphylococcus aureus (strain Mu50 / ATCC 700699).